Here is a 375-residue protein sequence, read N- to C-terminus: Alcohol dehydrogenase 1A (375 aa).

G1 is subject to N-acetylglycine. The Zn(2+) site is built by C46, H67, C97, C100, C103, C111, and C174. NAD(+)-binding positions include G199–G204, D223, K228, V293–L295, and R370.

Belongs to the zinc-containing alcohol dehydrogenase family. Class-I subfamily. As to quaternary structure, multimeric (with different ratios of monomers). The cofactor is Zn(2+).

The protein resides in the cytoplasm. It carries out the reaction a primary alcohol + NAD(+) = an aldehyde + NADH + H(+). The catalysed reaction is a secondary alcohol + NAD(+) = a ketone + NADH + H(+). The protein is Alcohol dehydrogenase 1A of Saara hardwickii (Indian spiny-tailed lizard).